Reading from the N-terminus, the 165-residue chain is Phosphopantetheine adenylyltransferase (165 aa).

Residue Thr-9 coordinates substrate. ATP is bound by residues 9 to 10 (TF) and His-17. 3 residues coordinate substrate: Lys-41, Leu-73, and Arg-87. Residues 88–90 (GLR), Glu-98, and 123–129 (YQFISGT) contribute to the ATP site.

This sequence belongs to the bacterial CoaD family. As to quaternary structure, homohexamer. It depends on Mg(2+) as a cofactor.

It localises to the cytoplasm. The enzyme catalyses (R)-4'-phosphopantetheine + ATP + H(+) = 3'-dephospho-CoA + diphosphate. Its pathway is cofactor biosynthesis; coenzyme A biosynthesis; CoA from (R)-pantothenate: step 4/5. Its function is as follows. Reversibly transfers an adenylyl group from ATP to 4'-phosphopantetheine, yielding dephospho-CoA (dPCoA) and pyrophosphate. This chain is Phosphopantetheine adenylyltransferase, found in Burkholderia vietnamiensis (strain G4 / LMG 22486) (Burkholderia cepacia (strain R1808)).